The chain runs to 209 residues: Uracil phosphoribosyltransferase (209 aa).

Residues arginine 79, arginine 104, and 131 to 139 each bind 5-phospho-alpha-D-ribose 1-diphosphate; that span reads DPMLATGGS. Uracil contacts are provided by residues isoleucine 194 and 199 to 201; that span reads GDA. Position 200 (aspartate 200) interacts with 5-phospho-alpha-D-ribose 1-diphosphate.

Belongs to the UPRTase family. Mg(2+) serves as cofactor.

The catalysed reaction is UMP + diphosphate = 5-phospho-alpha-D-ribose 1-diphosphate + uracil. It participates in pyrimidine metabolism; UMP biosynthesis via salvage pathway; UMP from uracil: step 1/1. Its activity is regulated as follows. Allosterically activated by GTP. Functionally, catalyzes the conversion of uracil and 5-phospho-alpha-D-ribose 1-diphosphate (PRPP) to UMP and diphosphate. This is Uracil phosphoribosyltransferase from Bacillus licheniformis (strain ATCC 14580 / DSM 13 / JCM 2505 / CCUG 7422 / NBRC 12200 / NCIMB 9375 / NCTC 10341 / NRRL NRS-1264 / Gibson 46).